Consider the following 864-residue polypeptide: DNA mismatch repair protein MutS (864 aa).

607 to 614 (GPNMGGKS) is an ATP binding site.

This sequence belongs to the DNA mismatch repair MutS family.

In terms of biological role, this protein is involved in the repair of mismatches in DNA. It is possible that it carries out the mismatch recognition step. This protein has a weak ATPase activity. The sequence is that of DNA mismatch repair protein MutS from Neisseria meningitidis serogroup A / serotype 4A (strain DSM 15465 / Z2491).